The following is a 206-amino-acid chain: Translocation protein SEC66 (206 aa).

Over 1–27 (MSEFNETKFSNNGTFFETEEPIVETKS) the chain is Lumenal. 2 N-linked (GlcNAc...) asparagine glycosylation sites follow: asparagine 5 and asparagine 12. Residues 28–48 (ISVYTPLIYVFILVVSLVMFA) form a helical; Signal-anchor for type II membrane protein membrane-spanning segment. Over 49–206 (SSYRKKQAKK…KINNDGRLVN (158 aa)) the chain is Cytoplasmic.

To S.pombe SpBC409.21. In terms of assembly, component of the heterotetrameric Sec62/63complex composed of SEC62, SEC63, SEC66 and SEC72. The Sec62/63 complex associates with the Sec61 complex to form the Sec complex. Part of a complex consisting of KAR2, SEC63, SEC66 and SEC72.

Its subcellular location is the endoplasmic reticulum membrane. Functionally, acts as a component of the Sec62/63 complex which is involved in SRP-independent post-translational translocation across the endoplasmic reticulum (ER) and functions together with the Sec61 complex and KAR2 in a channel-forming translocon complex. A cycle of assembly and disassembly of Sec62/63 complex from SEC61 may govern the activity of the translocon. SEC66 is required to attach or retain SEC72 in the SEC63 complex. It is essential for growth at elevated temperatures. The polypeptide is Translocation protein SEC66 (SEC66) (Saccharomyces cerevisiae (strain ATCC 204508 / S288c) (Baker's yeast)).